The sequence spans 631 residues: MKTYVSNEYDVIVVGAGHAGCEAALASARMGEKTLLLTISLDMVAFMPCNPSVGGPAKGTVVREIDALGGEMGKNIDKTYIQMRMLNTGKGPAVRALRAQADKWDYHEEMKRTIENTPNLTLRQAVVDDLIVEDGECRGVVTNTGARYRAKSVVLTTGTAARGRIFIGELNYSSGPNNTIPAIKLSESLERLGFKLRRFKTGTPPRVNRHTIDYSKTEEEPGDKEPRHFSFTSRDEDYLTDQTSCWMTYTNPKTHEIINENLDRSPMFSGDIVGVGPRYCPSIETKVVRFADKDRHQIFLEPEGRKTEEIYVGDFSTSMPEEVQLEMLHTVAGLEKVEMMRPGYAIEYDVVDPWQLTHTLETKRIKHLYMAGQMNGTSGYEEAAGQGLIAGINAALSAEGKPAFTLGRDEAYIGVLIDDLVTKGTEEPYRLLTSRAEYRLLLRHDNADLRLTEKGHDLGLIDDDRYAEFLAKKELIQEDLDRLGEITVHPTIAVNEYLAGLGQTDLNGGVKADVFLRRPRVTVEDVERLTGQKLAGDRYVKEQVEIDIKYAGYIKKQEIQVARLRRQEAKKIPKDIDYDQIEGLATEAREKLAKIRPETLAQAERISGVNPADLAILSVYVQNGKYAKVQK.

FAD is bound at residue 15–20; sequence GAGHAG. Residues 214–233 form a disordered region; the sequence is YSKTEEEPGDKEPRHFSFTS. Residue 276 to 290 coordinates NAD(+); it reads GPRYCPSIETKVVRF.

The protein belongs to the MnmG family. Homodimer. Heterotetramer of two MnmE and two MnmG subunits. FAD is required as a cofactor.

It localises to the cytoplasm. NAD-binding protein involved in the addition of a carboxymethylaminomethyl (cmnm) group at the wobble position (U34) of certain tRNAs, forming tRNA-cmnm(5)s(2)U34. The sequence is that of tRNA uridine 5-carboxymethylaminomethyl modification enzyme MnmG from Lactobacillus delbrueckii subsp. bulgaricus (strain ATCC 11842 / DSM 20081 / BCRC 10696 / JCM 1002 / NBRC 13953 / NCIMB 11778 / NCTC 12712 / WDCM 00102 / Lb 14).